Consider the following 66-residue polypeptide: Panusin (66 aa).

Residues 1-22 (MKTKAVLMLMLLVLVAATLVQG) form the signal peptide. The propeptide occupies 23 to 26 (EPEP). Cystine bridges form between Cys32/Cys54, Cys39/Cys61, and Cys44/Cys60. Tyr65 is modified (tyrosine amide).

In terms of assembly, forms dimers and higher-order oligomers. Contains 3 disulfide bonds.

In terms of biological role, antimicrobial peptide. Has antibacterial activity against Gram-positive bacteria S.aureus ATCC 29737 and B.subtilis ATCC 6633 as well as against Gram-negative bacteria E.coli ATCC 10536 and K.pneumoniae ATCC 10031. This is Panusin from Panulirus argus (Caribbean spiny lobster).